A 522-amino-acid polypeptide reads, in one-letter code: Secreted RxLR effector protein 105 (522 aa).

The first 21 residues, 1–21 (MRGPCSVITALLVVASSQIAA), serve as a signal peptide directing secretion. The RxLR-dEER signature appears at 48 to 63 (RYLRGSQHVLDSNEER).

It belongs to the RxLR effector family.

It is found in the secreted. It localises to the host nucleus. The protein resides in the host cytoplasm. Its function is as follows. Secreted effector that dos not suppress the host cell death induced by cell death-inducing proteins. This chain is Secreted RxLR effector protein 105, found in Plasmopara viticola (Downy mildew of grapevine).